Consider the following 515-residue polypeptide: RNA-splicing ligase RtcB homolog (515 aa).

Residues D129, C132, H237, H269, and H363 each coordinate Mn(2+). A GMP-binding site is contributed by 236 to 240 (NHYAE). GMP contacts are provided by residues 363-364 (HN), 412-415 (GGTM), S419, 438-441 (HGAG), and K514. The GMP-histidine intermediate role is filled by H438.

This sequence belongs to the RtcB family. In terms of assembly, catalytic component of the tRNA-splicing ligase complex. Requires Mn(2+) as cofactor.

It carries out the reaction a 3'-end 3'-phospho-ribonucleotide-RNA + a 5'-end dephospho-ribonucleoside-RNA + GTP = a ribonucleotidyl-ribonucleotide-RNA + GMP + diphosphate. The enzyme catalyses a 3'-end 2',3'-cyclophospho-ribonucleotide-RNA + a 5'-end dephospho-ribonucleoside-RNA + GTP + H2O = a ribonucleotidyl-ribonucleotide-RNA + GMP + diphosphate + H(+). Functionally, catalytic subunit of the tRNA-splicing ligase complex that acts by directly joining spliced tRNA halves to mature-sized tRNAs by incorporating the precursor-derived splice junction phosphate into the mature tRNA as a canonical 3',5'-phosphodiester. May act as an RNA ligase with broad substrate specificity, and may function toward other RNAs. The chain is RNA-splicing ligase RtcB homolog from Ostreococcus tauri.